Consider the following 587-residue polypeptide: MGSSKSKPKDPSQRRRSLEPPDSTHHGGFPASQTPNKTAAPDTHRTPSRSFGTVATEPKLFGGFNTSDTVTSPQRAGALAGGVTTFVALYDYESRTETDLSFKKGERLQIVNNTEGDWWLAHSLTTGQTGYIPSNYVAPSDSIQAEEWYFGKITRRESERLLLNPENPRGTFLVRESETTKGAYCLSVSDFDNAKGLNVKHYKIRKLDSGGFYITSRTQFSSLQQLVAYYSKHADGLCHRLTNVCPTSKPQTQGLAKDAWEIPRESLRLEVKLGQGCFGEVWMGTWNGTTRVAIKTLKPGTMSPEAFLQEAQVMKKLRHEKLVQLYAVVSEEPIYIVTEYMSKGSLLDFLKGEMGKYLRLPQLVDMAAQIASGMAYVERMNYVHRDLRAANILVGENLVCKVADFGLARLIEDNEYTARQGAKFPIKWTAPEAALYGRFTIKSDVWSFGILLTELTTKGRVPYPGMVNREVLDQVERGYRMPCPPECPESLHDLMCQCWRKDPEERPTFEYLQAFLEDYFTSTEPPVPAWREPIGLELLLAPEASLWGTGAWLRAEGPRFGEQPQSRMWHGEVSGAPSLIKTVLGHP.

Residues 1–58 (MGSSKSKPKDPSQRRRSLEPPDSTHHGGFPASQTPNKTAAPDTHRTPSRSFGTVATEP) form a disordered region. Residue Gly-2 is the site of N-myristoyl glycine; by host attachment. Residues 7–25 (KPKDPSQRRRSLEPPDSTH) are compositionally biased toward basic and acidic residues. The SH3 domain occupies 81-142 (GGVTTFVALY…PSNYVAPSDS (62 aa)). Positions 148-245 (WYFGKITRRE…GLCHRLTNVC (98 aa)) constitute an SH2 domain. Positions 267–520 (LRLEVKLGQG…YLQAFLEDYF (254 aa)) constitute a Protein kinase domain. ATP-binding positions include 273 to 281 (LGQGCFGEV) and Lys-295. The Proton acceptor role is filled by Asp-386. Tyr-416 is modified (phosphotyrosine; by autocatalysis).

It belongs to the protein kinase superfamily. Tyr protein kinase family. SRC subfamily. Post-translationally, the phosphorylated form is termed pp60v-src.

The enzyme catalyses L-tyrosyl-[protein] + ATP = O-phospho-L-tyrosyl-[protein] + ADP + H(+). Functionally, this phosphoprotein, required for both the initiation and the maintenance of neoplastic transformation, is a protein kinase that catalyzes the phosphorylation of tyrosine residues in vitro. This chain is Tyrosine-protein kinase transforming protein Src (V-SRC), found in Galliformes.